A 334-amino-acid chain; its full sequence is MARDEVRRILPADIKREVIVKDDKAETNPKWGFPPDKRPIELHIQYGVINLDKPPGPTSHEVVAWIKRILNLEKAGHGGTLDPKVSGVLPVALERATRVVQALLPAGKEYVALMHLHGDVPEDKIRAVMKEFEGEIIQRPPLRSAVKRRLRTRKVYYIEILEIDGRDVLFRVGVEAGTYIRSLIHHIGLALGVGAHMAELRRTRSGPFKEDETLVTLHDLVDYYHFWKEDGIEEYIRKAIQPMEKAVEHLPKIWIKDSAVAAVAHGANLTVPGIVKLNAGIKKGDLVAIMTLKDELVALGKAMMSTQEMIERSKGIAVDVEKVFMPRDWYPKLW.

Asp-82 serves as the catalytic Nucleophile. The PUA domain maps to 250–325 (LPKIWIKDSA…IAVDVEKVFM (76 aa)).

Belongs to the pseudouridine synthase TruB family. Type 2 subfamily.

The catalysed reaction is uridine(55) in tRNA = pseudouridine(55) in tRNA. Functionally, could be responsible for synthesis of pseudouridine from uracil-55 in the psi GC loop of transfer RNAs. This is Probable tRNA pseudouridine synthase B from Pyrococcus abyssi (strain GE5 / Orsay).